We begin with the raw amino-acid sequence, 175 residues long: Receptor activity-modifying protein 2 (175 aa).

The N-terminal stretch at 1 to 42 is a signal peptide; sequence MASLRVERAGGPRLPRTRVGRPAALRLLLLLGAVLNPHEALA. Topologically, residues 43 to 143 are extracellular; it reads QPLPTTGTPG…VQPTFSDPPE (101 aa). Intrachain disulfides connect C68–C99 and C84–C131. Residue N130 is glycosylated (N-linked (GlcNAc...) asparagine). Residues 144-165 traverse the membrane as a helical segment; it reads DVLLAMIIAPICLIPFLITLVV. Residues 166-175 are Cytoplasmic-facing; it reads WRSKDSEAQA.

Belongs to the RAMP family. In terms of assembly, heterodimer of CALCRL and RAMP2; the interaction forms the receptor complex for adrenomedullin/ADM. Heterodimer of CALCR and RAMP2; interaction forms the AMYR2 receptor complex for calcitonin/CALC and amylin/IAPP. In terms of tissue distribution, strongly expressed in lung, breast, immune system and fetal tissues.

The protein localises to the cell membrane. Its function is as follows. Accessory protein that interacts with and modulates the function of G-protein coupled receptors including calcitonin gene-related peptide type 1 receptor (CALCRL) and calcitonin receptor (CALCR). Required for the transport of CALCRL to the plasma membrane. Together with CALCRL, form a receptor complex for adrenomedullin/ADM. Together with CALCR, act as a receptor complex for calcitonin/CT/CALC. Together with CALCR, also act as a receptor complex for amylin/IAPP. This chain is Receptor activity-modifying protein 2, found in Homo sapiens (Human).